A 510-amino-acid chain; its full sequence is Gallate 1-beta-glucosyltransferase (510 aa).

Residue His19 is the Proton acceptor of the active site. His19 provides a ligand contact to an anthocyanidin. UDP-alpha-D-glucose is bound by residues Gln343, His358, Trp361, Asn362, Ser363, and Glu366. Position 381 (Gly381) interacts with an anthocyanidin. Residues Asp382 and Gln383 each contribute to the UDP-alpha-D-glucose site.

This sequence belongs to the UDP-glycosyltransferase family. In terms of tissue distribution, expressed in swelling buds and young leaves.

It catalyses the reaction 3,4,5-trihydroxybenzoate + UDP-alpha-D-glucose = 1-O-galloyl-beta-D-glucose + UDP. The catalysed reaction is vanillate + UDP-alpha-D-glucose = 1-O-(4-hydroxy-3-methoxybenzoyl)-beta-D-glucose + UDP. The enzyme catalyses 3,4-dihydroxybenzoate + UDP-alpha-D-glucose = 1-O-(3,4-dihydroxy-benzoyl)-beta-D-glucose + UDP. Functionally, glucosyltransferase that catalyzes the formation of 1-O-beta-D-glucose esters with hydroxybenzoic acids as preferred glucosyl acceptors. Has the highest activity with 3,4-dihydroxybenzoate, vanillate and gallate in vitro. Gallate is the predicted native substrate of the enzyme, which thus catalyzes the formation of 1-O-galloyl-beta-D-glucose, the first committed step of gallotannin biosynthesis. This chain is Gallate 1-beta-glucosyltransferase, found in Quercus robur (English oak).